The primary structure comprises 190 residues: Hypoxanthine/guanine phosphoribosyltransferase (190 aa).

This sequence belongs to the purine/pyrimidine phosphoribosyltransferase family. Archaeal HPRT subfamily. In terms of assembly, homodimer.

The protein resides in the cytoplasm. The enzyme catalyses IMP + diphosphate = hypoxanthine + 5-phospho-alpha-D-ribose 1-diphosphate. The catalysed reaction is GMP + diphosphate = guanine + 5-phospho-alpha-D-ribose 1-diphosphate. It participates in purine metabolism; IMP biosynthesis via salvage pathway; IMP from hypoxanthine: step 1/1. Catalyzes a salvage reaction resulting in the formation of IMP that is energically less costly than de novo synthesis. The sequence is that of Hypoxanthine/guanine phosphoribosyltransferase from Methanosarcina barkeri (strain Fusaro / DSM 804).